The sequence spans 394 residues: Arogenate dehydratase 2 (394 aa).

The interval 1-24 (MAATTTLRSPKIPHPPPESTPSNL) is disordered. A chloroplast-targeting transit peptide spans 1–47 (MAATTTLRSPKIPHPPPESTPSNLSYLSQISLTPVPKRRRFISIYAC). In terms of domain architecture, Prephenate dehydratase spans 108 to 283 (RVAYQGVRGA…NVTRFLMLAR (176 aa)). One can recognise an ACT domain in the interval 297-388 (SVVFSLDEGP…TFLRVLGSYP (92 aa)).

In terms of tissue distribution, expressed at low levels in petals (corollas and tubes), stems, leaves, pistils, stamens, ovaries and sepals.

It is found in the plastid. Its subcellular location is the chloroplast stroma. It carries out the reaction prephenate + H(+) = 3-phenylpyruvate + CO2 + H2O. It catalyses the reaction L-arogenate + H(+) = L-phenylalanine + CO2 + H2O. Its pathway is amino-acid biosynthesis; L-phenylalanine biosynthesis; L-phenylalanine from L-arogenate: step 1/1. Its function is as follows. Converts the prephenate and L-arogenate produced from the shikimate-chorismate pathway into 3-phenylpyruvate and phenylalanine (Phe), respectively. Involved in floral volatile benzenoids and phenylpropanoids (FVBP) production. This chain is Arogenate dehydratase 2, found in Petunia hybrida (Petunia).